The following is a 379-amino-acid chain: Cytochrome b (379 aa).

4 consecutive transmembrane segments (helical) span residues Phe-34 to Met-54, Trp-78 to Ile-99, Trp-114 to Leu-134, and Phe-179 to Thr-199. Heme b is bound by residues His-84 and His-98. 2 residues coordinate heme b: His-183 and His-197. His-202 contributes to the a ubiquinone binding site. Helical transmembrane passes span Leu-227–Ser-247, Leu-289–His-309, Leu-321–Ser-341, and Phe-348–Pro-368.

It belongs to the cytochrome b family. In terms of assembly, the cytochrome bc1 complex contains 11 subunits: 3 respiratory subunits (MT-CYB, CYC1 and UQCRFS1), 2 core proteins (UQCRC1 and UQCRC2) and 6 low-molecular weight proteins (UQCRH/QCR6, UQCRB/QCR7, UQCRQ/QCR8, UQCR10/QCR9, UQCR11/QCR10 and a cleavage product of UQCRFS1). This cytochrome bc1 complex then forms a dimer. Requires heme b as cofactor.

It localises to the mitochondrion inner membrane. Its function is as follows. Component of the ubiquinol-cytochrome c reductase complex (complex III or cytochrome b-c1 complex) that is part of the mitochondrial respiratory chain. The b-c1 complex mediates electron transfer from ubiquinol to cytochrome c. Contributes to the generation of a proton gradient across the mitochondrial membrane that is then used for ATP synthesis. This is Cytochrome b (MT-CYB) from Rhea americana (Greater rhea).